A 256-amino-acid chain; its full sequence is Biosynthetic peptidoglycan transglycosylase (256 aa).

The chain crosses the membrane as a helical span at residues 26 to 48 (VARWLAYAGGVFAGAWLATQLYY).

This sequence belongs to the glycosyltransferase 51 family.

The protein resides in the cell inner membrane. The catalysed reaction is [GlcNAc-(1-&gt;4)-Mur2Ac(oyl-L-Ala-gamma-D-Glu-L-Lys-D-Ala-D-Ala)](n)-di-trans,octa-cis-undecaprenyl diphosphate + beta-D-GlcNAc-(1-&gt;4)-Mur2Ac(oyl-L-Ala-gamma-D-Glu-L-Lys-D-Ala-D-Ala)-di-trans,octa-cis-undecaprenyl diphosphate = [GlcNAc-(1-&gt;4)-Mur2Ac(oyl-L-Ala-gamma-D-Glu-L-Lys-D-Ala-D-Ala)](n+1)-di-trans,octa-cis-undecaprenyl diphosphate + di-trans,octa-cis-undecaprenyl diphosphate + H(+). It participates in cell wall biogenesis; peptidoglycan biosynthesis. Its function is as follows. Peptidoglycan polymerase that catalyzes glycan chain elongation from lipid-linked precursors. This is Biosynthetic peptidoglycan transglycosylase from Burkholderia thailandensis (strain ATCC 700388 / DSM 13276 / CCUG 48851 / CIP 106301 / E264).